Here is a 296-residue protein sequence, read N- to C-terminus: 4-hydroxy-tetrahydrodipicolinate synthase (296 aa).

Threonine 49 is a pyruvate binding site. Catalysis depends on tyrosine 137, which acts as the Proton donor/acceptor. Residue lysine 166 is the Schiff-base intermediate with substrate of the active site. Position 208 (isoleucine 208) interacts with pyruvate.

Belongs to the DapA family. Homotetramer; dimer of dimers.

It localises to the cytoplasm. It carries out the reaction L-aspartate 4-semialdehyde + pyruvate = (2S,4S)-4-hydroxy-2,3,4,5-tetrahydrodipicolinate + H2O + H(+). It participates in amino-acid biosynthesis; L-lysine biosynthesis via DAP pathway; (S)-tetrahydrodipicolinate from L-aspartate: step 3/4. Catalyzes the condensation of (S)-aspartate-beta-semialdehyde [(S)-ASA] and pyruvate to 4-hydroxy-tetrahydrodipicolinate (HTPA). The sequence is that of 4-hydroxy-tetrahydrodipicolinate synthase from Chlorobium chlorochromatii (strain CaD3).